Reading from the N-terminus, the 345-residue chain is Protein SHI RELATED SEQUENCE 7 (345 aa).

A disordered region spans residues 7–28 (LGGRDHNKQDHHQEKDHNEDKS). Over residues 9 to 28 (GRDHNKQDHHQEKDHNEDKS) the composition is skewed to basic and acidic residues. Zn(2+) contacts are provided by Cys-119, Cys-122, Cys-130, Cys-135, Cys-139, and Cys-146. Positions 119–146 (CQDCGNQAKKDCPHMRCRTCCKSRGFDC) form a DNA-binding region, zn(2)-C6 fungal-type; degenerate. Residues 168-200 (AVLPAKRIRDANSRGGGDDDDDDKEDEKNDSCG) form a disordered region. Positions 256–259 (IGGH) match the Required for homo- and heterodimerization motif.

Belongs to the SHI protein family. Mainly expressed in the filaments of flowers, the shoot apex regions and pollen. Also present in leaves.

The protein localises to the nucleus. Its function is as follows. Transcription activator that binds DNA on 5'-ACTCTAC-3' and promotes auxin homeostasis-regulating gene expression (e.g. YUC genes), as well as genes affecting stamen development, cell expansion and timing of flowering. Synergistically with other SHI-related proteins, regulates gynoecium, stamen and leaf development in a dose-dependent manner, controlling apical-basal patterning. Promotes style and stigma formation, and influences vascular development during gynoecium development. May also have a role in the formation and/or maintenance of the shoot apical meristem (SAM). Regulates anther dehiscence and floral development. The chain is Protein SHI RELATED SEQUENCE 7 (SRS7) from Arabidopsis thaliana (Mouse-ear cress).